The sequence spans 109 residues: Iron-sulfur cluster assembly protein CyaY (109 aa).

It belongs to the frataxin family.

In terms of biological role, involved in iron-sulfur (Fe-S) cluster assembly. May act as a regulator of Fe-S biogenesis. The chain is Iron-sulfur cluster assembly protein CyaY from Shewanella sp. (strain ANA-3).